The chain runs to 434 residues: Nuclear receptor subfamily 1 group I member 2 (434 aa).

The segment at residues 38-107 (PQICRVCGDK…RLRKCLESGM (70 aa)) is a DNA-binding region (nuclear receptor). 2 consecutive NR C4-type zinc fingers follow at residues 41 to 61 (CRVC…CEGC) and 77 to 102 (CPFR…LRKC). The Bipartite nuclear localization signal motif lies at 66–92 (RRAMKRNARLRCPFRKGACEITRKTRR). A hinge region spans residues 108 to 145 (KKEMIMSDAAVEERRALIKRKKRERIGTQPPGVQGLTE). The region spanning 146–433 (EQRMMIRELM…LMQELFGITG (288 aa)) is the NR LBD domain. Residues S247, 285–288 (QLRF), and H407 contribute to the hyperforin site.

It belongs to the nuclear hormone receptor family. NR1 subfamily. In terms of assembly, heterodimer with RXRA. Interacts with NCOA1. Interacts (via domain NR LBD) with CRY1 and CRY2 in a ligand-dependent manner.

It is found in the nucleus. Its function is as follows. Nuclear receptor that binds and is activated by a variety of endogenous and xenobiotic compounds. Transcription factor that activates the transcription of multiple genes involved in the metabolism and secretion of potentially harmful xenobiotics, endogenous compounds and drugs. Response to specific ligands is species-specific, due to differences in the ligand-binding domain. Activated by naturally occurring steroids, such as pregnenolone and progesterone. Binds to a response element in the promoters of the CYP3A4 and ABCB1/MDR1 genes. In Macaca mulatta (Rhesus macaque), this protein is Nuclear receptor subfamily 1 group I member 2 (NR1I2).